Here is a 132-residue protein sequence, read N- to C-terminus: Large ribosomal subunit protein uL14 (132 aa).

This sequence belongs to the universal ribosomal protein uL14 family. In terms of assembly, part of the 50S ribosomal subunit. Forms a cluster with proteins L3 and L24e, part of which may contact the 16S rRNA in 2 intersubunit bridges.

Its function is as follows. Binds to 23S rRNA. Forms part of two intersubunit bridges in the 70S ribosome. The polypeptide is Large ribosomal subunit protein uL14 (Thermoplasma volcanium (strain ATCC 51530 / DSM 4299 / JCM 9571 / NBRC 15438 / GSS1)).